Consider the following 237-residue polypeptide: MQKLAELYRGKAKTVYTTEDPDLLVLEFRNDTSAGDGARIEQFDRKGMVNNKFNHFIMSKLEEAGIPTQMVSLLSDNEVLVKKLEMVPVECVVRNRAAGSLVKRLGIEEGIELNPPLFDLFLKNDAMHDPMVNESYCKTFGWVSEENLARMKELSYKANDVLSKLFGDAGLILVDFKLEFGLFNGEVVLGDEFSPDGSRLWDKETLNKMDKDRFRQSLGGLIEAYEEVAHRIGVKLD.

The protein belongs to the SAICAR synthetase family.

It catalyses the reaction 5-amino-1-(5-phospho-D-ribosyl)imidazole-4-carboxylate + L-aspartate + ATP = (2S)-2-[5-amino-1-(5-phospho-beta-D-ribosyl)imidazole-4-carboxamido]succinate + ADP + phosphate + 2 H(+). Its pathway is purine metabolism; IMP biosynthesis via de novo pathway; 5-amino-1-(5-phospho-D-ribosyl)imidazole-4-carboxamide from 5-amino-1-(5-phospho-D-ribosyl)imidazole-4-carboxylate: step 1/2. The chain is Phosphoribosylaminoimidazole-succinocarboxamide synthase from Pectobacterium atrosepticum (strain SCRI 1043 / ATCC BAA-672) (Erwinia carotovora subsp. atroseptica).